Here is a 299-residue protein sequence, read N- to C-terminus: Probable lipid kinase YegS-like (299 aa).

The region spanning 2 to 133 is the DAGKc domain; that stretch reads ATYPESLLIL…VDIAQVNDKT (132 aa). ATP is bound by residues T40, 66-72, and T95; that span reads GDGTINE. Mg(2+) contacts are provided by L215, D218, and L220. E271 acts as the Proton acceptor in catalysis.

It belongs to the diacylglycerol/lipid kinase family. YegS lipid kinase subfamily. Mg(2+) serves as cofactor. Requires Ca(2+) as cofactor.

It is found in the cytoplasm. Its function is as follows. Probably phosphorylates lipids; the in vivo substrate is unknown. The protein is Probable lipid kinase YegS-like of Enterobacter sp. (strain 638).